A 475-amino-acid chain; its full sequence is UDP-N-acetylmuramate--L-alanine ligase (475 aa).

112–118 lines the ATP pocket; the sequence is GTHGKTT.

The protein belongs to the MurCDEF family.

Its subcellular location is the cytoplasm. It carries out the reaction UDP-N-acetyl-alpha-D-muramate + L-alanine + ATP = UDP-N-acetyl-alpha-D-muramoyl-L-alanine + ADP + phosphate + H(+). The protein operates within cell wall biogenesis; peptidoglycan biosynthesis. Functionally, cell wall formation. The sequence is that of UDP-N-acetylmuramate--L-alanine ligase from Cupriavidus pinatubonensis (strain JMP 134 / LMG 1197) (Cupriavidus necator (strain JMP 134)).